Consider the following 1083-residue polypeptide: Integrator complex subunit 3 homolog (1083 aa).

Disordered stretches follow at residues 551-579, 929-953, and 1014-1083; these read NEAV…DLPL, YPSS…TPSA, and AVGR…NDSD. Residues 942-953 are compositionally biased toward low complexity; the sequence is KGSSAASSTPSA. A phosphoserine mark is found at S1053, S1054, S1058, and S1059. The span at 1066–1077 shows a compositional bias: basic residues; the sequence is HKVTQPAKKRKK.

This sequence belongs to the Integrator subunit 3 family. In terms of assembly, belongs to the multiprotein complex Integrator, at least composed of IntS1, IntS2, IntS3, IntS4, omd/IntS5, IntS6, defl/IntS7, IntS8, IntS9, IntS10, IntS11, IntS12, asun/IntS13, IntS14 and IntS15. The core complex associates with protein phosphatase 2A subunits mts/PP2A and Pp2A-29B, to form the Integrator-PP2A (INTAC) complex.

Its subcellular location is the nucleus. The protein resides in the cytoplasm. Component of the integrator complex, a multiprotein complex that terminates RNA polymerase II (Pol II) transcription in the promoter-proximal region of genes. The integrator complex provides a quality checkpoint during transcription elongation by driving premature transcription termination of transcripts that are unfavorably configured for transcriptional elongation: the complex terminates transcription by (1) catalyzing dephosphorylation of the C-terminal domain (CTD) of Pol II subunit Polr2A/Rbp1 and Spt5, and (2) degrading the exiting nascent RNA transcript via endonuclease activity. The integrator complex is also involved in the 3'-end processing of the U7 snRNA, and also the spliceosomal snRNAs U1, U2, U4 and U5. This chain is Integrator complex subunit 3 homolog (IntS3), found in Drosophila grimshawi (Hawaiian fruit fly).